A 187-amino-acid polypeptide reads, in one-letter code: Elongation factor P (187 aa).

The protein belongs to the elongation factor P family.

It is found in the cytoplasm. It functions in the pathway protein biosynthesis; polypeptide chain elongation. In terms of biological role, involved in peptide bond synthesis. Stimulates efficient translation and peptide-bond synthesis on native or reconstituted 70S ribosomes in vitro. Probably functions indirectly by altering the affinity of the ribosome for aminoacyl-tRNA, thus increasing their reactivity as acceptors for peptidyl transferase. In Mycoplasmopsis agalactiae (strain NCTC 10123 / CIP 59.7 / PG2) (Mycoplasma agalactiae), this protein is Elongation factor P.